We begin with the raw amino-acid sequence, 137 residues long: ATP synthase epsilon chain (137 aa).

The protein belongs to the ATPase epsilon chain family. In terms of assembly, F-type ATPases have 2 components, CF(1) - the catalytic core - and CF(0) - the membrane proton channel. CF(1) has five subunits: alpha(3), beta(3), gamma(1), delta(1), epsilon(1). CF(0) has three main subunits: a, b and c.

The protein localises to the cellular thylakoid membrane. Its function is as follows. Produces ATP from ADP in the presence of a proton gradient across the membrane. This is ATP synthase epsilon chain (atpC) from Synechococcus elongatus (strain ATCC 33912 / PCC 7942 / FACHB-805) (Anacystis nidulans R2).